We begin with the raw amino-acid sequence, 546 residues long: Metal transporter Nramp6.2 (546 aa).

The next 8 membrane-spanning stretches (helical) occupy residues 50–70 (FLPYVGPGFLVSLAYLDPGNL), 83–103 (ELLWVILIGLIFALIIQSLAA), 128–150 (SLWLLAEVAVIAADIPEVIGTAF), 154–176 (ILFHIPVWAGVLMTGLSTLLLLG), 187–207 (LLISALVFTMAACFFGELSYV), 233–253 (IALLGALVMPHNLFLHSALVL), 270–290 (YFLIESGFALFVAFLINVSII), and 333–353 (IYAIALLASGQSSTITGTYAG). An N-linked (GlcNAc...) asparagine glycan is attached at Asn-371. Transmembrane regions (helical) follow at residues 374–394 (TRCIAILPSLFVSIIGGSSGA), 397–417 (LIIIASMILSFELPFALIPLL), 433–453 (IYIIVISWTLGFMIIGINVYY), and 473–493 (VIIGIIVFPLMAIYILAIIYL).

It belongs to the NRAMP (TC 2.A.55) family.

Its subcellular location is the membrane. In terms of biological role, probable divalent metal transporter. The sequence is that of Metal transporter Nramp6.2 from Populus trichocarpa (Western balsam poplar).